Consider the following 235-residue polypeptide: Modulator of macroautophagy TMEM150B (235 aa).

Residues 1–8 are Cytoplasmic-facing; that stretch reads MWGYLSLL. The helical transmembrane segment at 9–29 threads the bilayer; that stretch reads PMCLAFWAIAGIWTVFSLAVV. Residues 30–51 are Extracellular-facing; that stretch reads NKAVNLTDGFPYISVCGNVPPQ. N-linked (GlcNAc...) asparagine glycosylation is present at Asn-34. Residues 52 to 72 traverse the membrane as a helical segment; the sequence is SCIFSQVLNIGAASAAWICIL. Topologically, residues 73–88 are cytoplasmic; it reads RYYQLRDWGVRKWHNQ. A helical membrane pass occupies residues 89-109; that stretch reads VILWTGLLCALGTSIVGNFQE. Residues 110–116 lie on the Extracellular side of the membrane; the sequence is KNQRATH. A helical membrane pass occupies residues 117-137; sequence LTGAFLAFFVGIVYFWLQLFL. Topologically, residues 138 to 156 are cytoplasmic; that stretch reads SWRMKNLPQPGAPWIGPLR. A helical transmembrane segment spans residues 157–177; sequence LVLCSACFILEVAMVVLHSWS. At 178 to 180 the chain is on the extracellular side; it reads MRS. The chain crosses the membrane as a helical span at residues 181 to 201; it reads VSAICEWVAAMLLFILFGLLA. Over 202-235 the chain is Cytoplasmic; it reads VDFSRLDSCTLCLQPGSGSLRPPPDSPTSLHVQL.

The protein belongs to the DRAM/TMEM150 family.

The protein localises to the cell membrane. The protein resides in the endosome membrane. It is found in the cytoplasmic vesicle. It localises to the autophagosome membrane. Modulator of macroautophagy that causes accumulation of autophagosomes under basal conditions and enhances autophagic flux. Represses cell death and promotes long-term clonogenic survival of cells grown in the absence of glucose in a macroautophagy-independent manner. May have some role in extracellular matrix engulfment or growth factor receptor recycling, both of which can modulate cell survival. The sequence is that of Modulator of macroautophagy TMEM150B from Bos taurus (Bovine).